The following is a 613-amino-acid chain: Ribosome-associated molecular chaperone SSB1 (613 aa).

Alanine 2 is modified (N-acetylalanine). Residues 2–391 (AEGVFQGAIG…ILTGQSTSDE (390 aa)) form a nucleotide binding domain (NBD) region. 16–18 (TTY) is a binding site for ATP. Phosphothreonine is present on threonine 47. Residues lysine 73, 205–207 (GGT), 271–278 (ERAKRTLS), and glycine 342 contribute to the ATP site. The tract at residues 392 to 402 (TKDLLLLDVAP) is inter-domain linker. Residues 403–613 (LSLGVGMQGD…RVVTKAMSSR (211 aa)) are substrate binding domain (SBD). Residues 428-430 (KRR) carry the Contributes to ribosome binding motif. At threonine 431 the chain carries Phosphothreonine. The interval 516-612 (SEEIEKMVNQ…KRVVTKAMSS (97 aa)) is lid domain (SBDalpha). The Nuclear export signal motif lies at 574-582 (IEAALSDAL). Positions 601 to 613 (GLKRVVTKAMSSR) are required for interaction with ribosomes.

It belongs to the heat shock protein 70 family. Ssb-type Hsp70 subfamily. As to quaternary structure, binds to ribosomes. Binds close to the ribosomal tunnel exit via contacts with both ribosomal proteins RPL35, RPL39 and RPL19, and rRNA. Directly interacts with nascent polypeptides. This interaction is dependent on the ribosome-associated complex (RAC). Interacts with SSE1. Interacts with FES1. Interacts with NAP1.

It localises to the cytoplasm. It catalyses the reaction ATP + H2O = ADP + phosphate + H(+). Functionally, ribosome-bound, Hsp70-type chaperone that assists in the cotranslational folding of newly synthesized proteins in the cytosol. Stimulates folding by interacting with nascent chains, binding to short, largely hydrophobic sequences exposed by unfolded proteins, thereby stabilizing longer, more slowly translated, and aggregation-prone nascent polypeptides and domains that cannot fold stably until fully synthesized. The Hsp70-protein substrate interaction depends on ATP-binding and on allosteric regulation between the NBD and the SBD. The ATP-bound state is characterized by a fast exchange rate of substrate (low affinity state), while in the ADP-bound state exchange is much slower (high affinity state). During the Hsp70 cycle, the chaperone switches between the ATP-bound state (open conformation) and the ADP-bound state (closed conformation) by major conformational rearrangements involving mainly the lid domain. Ssb cooperates with a specific Hsp40/Hsp70 co-chaperone termed the ribosome-associated complex (RAC), which stimulates the ATPase activity of the ribosome-associated pool of Ssbs and switches it to the high affinity substrate binding state. Hsp110 chaperone SSE1 and FES1 act as nucleotide exchange factors that cause substrate release. The protein is Ribosome-associated molecular chaperone SSB1 of Saccharomyces cerevisiae (strain ATCC 204508 / S288c) (Baker's yeast).